A 330-amino-acid polypeptide reads, in one-letter code: MPRAAVVCGLGSYLPEAVLSNDMLAAELDTSDAWISSRTGVRQRHIAGDLGSGDLALRAASAALASAGLERVDAVVLATSTGDFCCPATAPRVAARLGLVGALAFDLSAACTGFVYGLASVGSLISAGLADSALLVGVDTFSHTLDPADRSTRALFGDGAGAVVLRAGDAEEEGALLAFDLGSDGHQFDLLMTPAVSRAERSSGQASNYFRMDGKAVFGQAVTQMSDSVRRVLDRVGWQASDLHHLVPHQANTRILAAVADQLDLPVERVVSNIAEVGNTVAASIPLALAHGLRQGILRDGGNMVLTGFGAGLTWGSVALRWPKIVPTMD.

Active-site residues include Cys111 and His249. The ACP-binding stretch occupies residues 250–254; sequence QANTR. Residue Asn279 is part of the active site.

Belongs to the thiolase-like superfamily. FabH family. Homodimer.

The protein localises to the cytoplasm. It catalyses the reaction malonyl-[ACP] + acetyl-CoA + H(+) = 3-oxobutanoyl-[ACP] + CO2 + CoA. It participates in lipid metabolism; fatty acid biosynthesis. In terms of biological role, catalyzes the condensation reaction of fatty acid synthesis by the addition to an acyl acceptor of two carbons from malonyl-ACP. Catalyzes the first condensation reaction which initiates fatty acid synthesis and may therefore play a role in governing the total rate of fatty acid production. Possesses both acetoacetyl-ACP synthase and acetyl transacylase activities. Its substrate specificity determines the biosynthesis of branched-chain and/or straight-chain of fatty acids. The polypeptide is Beta-ketoacyl-[acyl-carrier-protein] synthase III (Pseudomonas aeruginosa (strain LESB58)).